The chain runs to 544 residues: Hydroxylamine reductase (544 aa).

[4Fe-4S] cluster contacts are provided by Cys-3, Cys-6, Cys-15, and Cys-21. Residues His-244, Glu-268, Cys-313, Cys-400, Cys-428, Cys-453, Glu-487, and Lys-489 each contribute to the hybrid [4Fe-2O-2S] cluster site. Cys-400 carries the post-translational modification Cysteine persulfide.

This sequence belongs to the HCP family. It depends on [4Fe-4S] cluster as a cofactor. The cofactor is hybrid [4Fe-2O-2S] cluster.

The protein resides in the cytoplasm. The catalysed reaction is A + NH4(+) + H2O = hydroxylamine + AH2 + H(+). Functionally, catalyzes the reduction of hydroxylamine to form NH(3) and H(2)O. The protein is Hydroxylamine reductase of Trichormus variabilis (strain ATCC 29413 / PCC 7937) (Anabaena variabilis).